A 533-amino-acid chain; its full sequence is uncharacterized protein (533 aa).

This is an uncharacterized protein from Clostridium beijerinckii (strain ATCC 51743 / NCIMB 8052) (Clostridium acetobutylicum).